A 178-amino-acid chain; its full sequence is Crossover junction endodeoxyribonuclease RuvC (178 aa).

Active-site residues include Asp-20, Glu-80, and Asp-154. Residues Asp-20, Glu-80, and Asp-154 each coordinate Mg(2+).

Belongs to the RuvC family. Homodimer which binds Holliday junction (HJ) DNA. The HJ becomes 2-fold symmetrical on binding to RuvC with unstacked arms; it has a different conformation from HJ DNA in complex with RuvA. In the full resolvosome a probable DNA-RuvA(4)-RuvB(12)-RuvC(2) complex forms which resolves the HJ. It depends on Mg(2+) as a cofactor.

It is found in the cytoplasm. It carries out the reaction Endonucleolytic cleavage at a junction such as a reciprocal single-stranded crossover between two homologous DNA duplexes (Holliday junction).. The RuvA-RuvB-RuvC complex processes Holliday junction (HJ) DNA during genetic recombination and DNA repair. Endonuclease that resolves HJ intermediates. Cleaves cruciform DNA by making single-stranded nicks across the HJ at symmetrical positions within the homologous arms, yielding a 5'-phosphate and a 3'-hydroxyl group; requires a central core of homology in the junction. The consensus cleavage sequence is 5'-(A/T)TT(C/G)-3'. Cleavage occurs on the 3'-side of the TT dinucleotide at the point of strand exchange. HJ branch migration catalyzed by RuvA-RuvB allows RuvC to scan DNA until it finds its consensus sequence, where it cleaves and resolves the cruciform DNA. The polypeptide is Crossover junction endodeoxyribonuclease RuvC (Rhodopirellula baltica (strain DSM 10527 / NCIMB 13988 / SH1)).